Here is a 251-residue protein sequence, read N- to C-terminus: Probable transcriptional regulatory protein MMAR_2098 (251 aa).

It belongs to the TACO1 family.

The protein localises to the cytoplasm. In Mycobacterium marinum (strain ATCC BAA-535 / M), this protein is Probable transcriptional regulatory protein MMAR_2098.